We begin with the raw amino-acid sequence, 162 residues long: Caveolin-2 (162 aa).

At 1-86 (MGLETEKADV…FEISKYVIYK (86 aa)) the chain is on the cytoplasmic side. At Tyr-19 the chain carries Phosphotyrosine; by SRC. A phosphoserine mark is found at Ser-20 and Ser-23. Tyr-27 bears the Phosphotyrosine; by SRC mark. Positions 87–107 (FLTVFLAIPLAFVAGILFATL) form an intramembrane region, helical. At 108–162 (SCLHIWIIMPFVKTCLMLLPSVQTIWKSVTDVVIAPLCTSAGRSFSSVSLQLSHD) the chain is on the cytoplasmic side.

This sequence belongs to the caveolin family. Monomer or homodimer. Interacts with CAV1; the interaction forms a stable heterooligomeric complex that is required for targeting to lipid rafts and for caveolae formation. Tyrosine phosphorylated forms do not form heterooligomers with the Tyr-19-phosphorylated form existing as a monomer or dimer, and the Tyr-27-form as a monomer only. Interacts (tyrosine phosphorylated form) with the SH2 domain-containing proteins, RASA1, NCK1 and SRC. Interacts (tyrosine phosphorylated form) with INSR, the interaction (Tyr-27-phosphorylated form) is increased on insulin stimulation. Interacts (Tyr-19 phosphorylated form) with MAPK1 (phosphorylated form); the interaction, promoted by insulin, leads to nuclear location and MAPK1 activation. Interacts with STAT3; the interaction is increased on insulin-induced tyrosine phosphorylation leading to STAT activation. Post-translationally, phosphorylated on serine and tyrosine residues. CAV1 promotes phosphorylation on Ser-23 which then targets the complex to the plasma membrane, lipid rafts and caveolae. Phosphorylation on both Tyr-19 and Tyr-27 is required for insulin-induced 'Ser-727' phosphorylation of STAT3 and its activation. Phosphorylation on Tyr-19 is required for insulin-induced phosphorylation of MAPK1 and DNA binding of STAT3. Tyrosine phosphorylation is induced by both EGF and insulin.

It localises to the nucleus. The protein localises to the cytoplasm. Its subcellular location is the golgi apparatus membrane. It is found in the cell membrane. The protein resides in the membrane. It localises to the caveola. In terms of biological role, may act as a scaffolding protein within caveolar membranes. Interacts directly with G-protein alpha subunits and can functionally regulate their activity. Acts as an accessory protein in conjunction with CAV1 in targeting to lipid rafts and driving caveolae formation. Positive regulator of cellular mitogenesis of the MAPK signaling pathway. Required for the insulin-stimulated nuclear translocation and activation of MAPK1 and STAT3, and the subsequent regulation of cell cycle progression. This is Caveolin-2 (CAV2) from Equus caballus (Horse).